We begin with the raw amino-acid sequence, 97 residues long: Protein RnfH (97 aa).

This sequence belongs to the UPF0125 (RnfH) family.

The polypeptide is Protein RnfH (Proteus mirabilis (strain HI4320)).